Reading from the N-terminus, the 246-residue chain is Phosducin (246 aa).

A compositionally biased stretch (acidic residues) spans 1-14; the sequence is MEEAKSQSLEEDFE. The tract at residues 1–70 is disordered; sequence MEEAKSQSLE…GKDSKERVSR (70 aa). The Phosducin domain occupies 1 to 244; sequence MEEAKSQSLE…LEHTKIEEED (244 aa). Residues 60–69 are compositionally biased toward basic and acidic residues; sequence NGKDSKERVS. A Phosphoserine; by PKA modification is found at S73. Positions 111–246 are thioredoxin fold; that stretch reads YGFVYELETG…HTKIEEEDVE (136 aa).

The protein belongs to the phosducin family. Forms a complex with the beta and gamma subunits of the GTP-binding protein, transducin. Interacts with CRX. In terms of processing, light-induced changes in cyclic nucleotide levels modulate the phosphorylation of this protein by cAMP kinase.

It localises to the cytoplasm. Its subcellular location is the cytosol. The protein resides in the nucleus. It is found in the cell projection. The protein localises to the cilium. It localises to the photoreceptor outer segment. Its subcellular location is the photoreceptor inner segment. In terms of biological role, may participate in the regulation of visual phototransduction or in the integration of photoreceptor metabolism. Inhibits the transcriptional activation activity of the cone-rod homeobox CRX. This chain is Phosducin (PDC), found in Homo sapiens (Human).